A 201-amino-acid chain; its full sequence is CASP-like protein 2A1 (201 aa).

Residues 1-27 (MEKRDKGSSPMATMMGSRDENEDVENT) are disordered. At 1-30 (MEKRDKGSSPMATMMGSRDENEDVENTTRT) the chain is on the cytoplasmic side. Residues 31 to 51 (AETMLRLVPMALCVSALVVML) traverse the membrane as a helical segment. Over 52-72 (KNTQTNDYGSLSYSDLGAFRY) the chain is Extracellular. A helical transmembrane segment spans residues 73-93 (LVHVNGICAGYSLLSAVIVAM). The Cytoplasmic segment spans residues 94 to 101 (PRASTMPR). The chain crosses the membrane as a helical span at residues 102 to 122 (AWAFFLLDQVLTYVILAAGTV). Topologically, residues 123-152 (STEVLYLASKGDTTITWSEACVSFGGFCHK) are extracellular. The helical transmembrane segment at 153–173 (ALISIVITFVVVICYAALSLL) threads the bilayer. The Cytoplasmic segment spans residues 174 to 201 (SSYKLFSKYDSPVLTYPGKGIEIATFHG).

This sequence belongs to the Casparian strip membrane proteins (CASP) family. As to quaternary structure, homodimer and heterodimers.

It localises to the cell membrane. This Populus trichocarpa (Western balsam poplar) protein is CASP-like protein 2A1.